The chain runs to 262 residues: MMPYISKNAVIIGRDRKFITDNVTVEEPLQISIENENRIYNVSVIMRTPVDDEALATGFLVNEGIIEPDKIIKVSKRSENNVCVSVESFNEDLLKNRNFYVNSSCGVCGKTDIENVFIKSHGIVRSQSRTDHSIILGLPDKMMKNQKIFSYTGGIHAAALFDLNGNMISISEDIGRHNAVDKTIGKMILKNVYRMEDSILQVSGRAGFEILQKASMFGVSIVSSVSAPSSLAIDVAETFNITLISFVRKNRMNIYSHPERIL.

Cys105 (cysteine persulfide intermediate) is an active-site residue. 246–251 (FVRKNR) is a binding site for Mo-bis(molybdopterin guanine dinucleotide).

Belongs to the FdhD family.

It is found in the cytoplasm. In terms of biological role, required for formate dehydrogenase (FDH) activity. Acts as a sulfur carrier protein that transfers sulfur from IscS to the molybdenum cofactor prior to its insertion into FDH. The chain is Sulfur carrier protein FdhD from Picrophilus torridus (strain ATCC 700027 / DSM 9790 / JCM 10055 / NBRC 100828 / KAW 2/3).